The following is a 162-amino-acid chain: NADH-quinone oxidoreductase subunit I (162 aa).

4Fe-4S ferredoxin-type domains lie at 52–82 (LRRY…IEAG) and 93–122 (VRYD…EGPN). Residues Cys-62, Cys-65, Cys-68, Cys-72, Cys-102, Cys-105, Cys-108, and Cys-112 each coordinate [4Fe-4S] cluster.

Belongs to the complex I 23 kDa subunit family. As to quaternary structure, NDH-1 is composed of 14 different subunits. Subunits NuoA, H, J, K, L, M, N constitute the membrane sector of the complex. Requires [4Fe-4S] cluster as cofactor.

The protein localises to the cell inner membrane. It carries out the reaction a quinone + NADH + 5 H(+)(in) = a quinol + NAD(+) + 4 H(+)(out). Its function is as follows. NDH-1 shuttles electrons from NADH, via FMN and iron-sulfur (Fe-S) centers, to quinones in the respiratory chain. The immediate electron acceptor for the enzyme in this species is believed to be ubiquinone. Couples the redox reaction to proton translocation (for every two electrons transferred, four hydrogen ions are translocated across the cytoplasmic membrane), and thus conserves the redox energy in a proton gradient. The protein is NADH-quinone oxidoreductase subunit I of Bradyrhizobium sp. (strain BTAi1 / ATCC BAA-1182).